The following is a 265-amino-acid chain: Indole-3-glycerol phosphate synthase (265 aa).

Belongs to the TrpC family.

The catalysed reaction is 1-(2-carboxyphenylamino)-1-deoxy-D-ribulose 5-phosphate + H(+) = (1S,2R)-1-C-(indol-3-yl)glycerol 3-phosphate + CO2 + H2O. Its pathway is amino-acid biosynthesis; L-tryptophan biosynthesis; L-tryptophan from chorismate: step 4/5. In Xanthomonas euvesicatoria pv. vesicatoria (strain 85-10) (Xanthomonas campestris pv. vesicatoria), this protein is Indole-3-glycerol phosphate synthase.